The chain runs to 303 residues: Dihydroorotate dehydrogenase B (NAD(+)), catalytic subunit (303 aa).

Residues serine 21 and 45-46 (KG) contribute to the FMN site. Residues lysine 45 and 69 to 73 (NAVGL) contribute to the substrate site. 2 residues coordinate FMN: asparagine 99 and asparagine 127. Residue asparagine 127 participates in substrate binding. The active-site Nucleophile is cysteine 130. FMN is bound by residues lysine 165 and isoleucine 191. 192–193 (NT) is a binding site for substrate. FMN contacts are provided by residues glycine 217, 243–244 (GG), and 265–266 (GT).

The protein belongs to the dihydroorotate dehydrogenase family. Type 1 subfamily. As to quaternary structure, heterotetramer of 2 PyrK and 2 PyrD type B subunits. FMN is required as a cofactor.

It is found in the cytoplasm. It carries out the reaction (S)-dihydroorotate + NAD(+) = orotate + NADH + H(+). The protein operates within pyrimidine metabolism; UMP biosynthesis via de novo pathway; orotate from (S)-dihydroorotate (NAD(+) route): step 1/1. Functionally, catalyzes the conversion of dihydroorotate to orotate with NAD(+) as electron acceptor. The chain is Dihydroorotate dehydrogenase B (NAD(+)), catalytic subunit (pyrD) from Phocaeicola vulgatus (strain ATCC 8482 / DSM 1447 / JCM 5826 / CCUG 4940 / NBRC 14291 / NCTC 11154) (Bacteroides vulgatus).